Consider the following 452-residue polypeptide: Bifunctional protein GlmU (452 aa).

Residues 1–232 (MTTRTSLTIV…EDEVRGINTK (232 aa)) form a pyrophosphorylase region. Residues 11–14 (LAAG), Lys25, Gln78, and 83–84 (GT) contribute to the UDP-N-acetyl-alpha-D-glucosamine site. Asp108 lines the Mg(2+) pocket. UDP-N-acetyl-alpha-D-glucosamine contacts are provided by Gly144, Glu158, Asn173, and Asn230. Asn230 is a Mg(2+) binding site. The segment at 233–253 (AQLAEAEAVMQTRLRQAAMTA) is linker. Positions 254–452 (GVTLISPETI…SARARKPKTS (199 aa)) are N-acetyltransferase. Residues Arg319 and Lys337 each contribute to the UDP-N-acetyl-alpha-D-glucosamine site. Catalysis depends on His349, which acts as the Proton acceptor. UDP-N-acetyl-alpha-D-glucosamine-binding residues include Tyr352 and Asn363. Residues Ala366, 372–373 (NY), Ser391, Ser409, and Arg426 each bind acetyl-CoA.

It in the N-terminal section; belongs to the N-acetylglucosamine-1-phosphate uridyltransferase family. The protein in the C-terminal section; belongs to the transferase hexapeptide repeat family. As to quaternary structure, homotrimer. Mg(2+) serves as cofactor.

It localises to the cytoplasm. The enzyme catalyses alpha-D-glucosamine 1-phosphate + acetyl-CoA = N-acetyl-alpha-D-glucosamine 1-phosphate + CoA + H(+). It catalyses the reaction N-acetyl-alpha-D-glucosamine 1-phosphate + UTP + H(+) = UDP-N-acetyl-alpha-D-glucosamine + diphosphate. The protein operates within nucleotide-sugar biosynthesis; UDP-N-acetyl-alpha-D-glucosamine biosynthesis; N-acetyl-alpha-D-glucosamine 1-phosphate from alpha-D-glucosamine 6-phosphate (route II): step 2/2. It participates in nucleotide-sugar biosynthesis; UDP-N-acetyl-alpha-D-glucosamine biosynthesis; UDP-N-acetyl-alpha-D-glucosamine from N-acetyl-alpha-D-glucosamine 1-phosphate: step 1/1. Its pathway is bacterial outer membrane biogenesis; LPS lipid A biosynthesis. Its function is as follows. Catalyzes the last two sequential reactions in the de novo biosynthetic pathway for UDP-N-acetylglucosamine (UDP-GlcNAc). The C-terminal domain catalyzes the transfer of acetyl group from acetyl coenzyme A to glucosamine-1-phosphate (GlcN-1-P) to produce N-acetylglucosamine-1-phosphate (GlcNAc-1-P), which is converted into UDP-GlcNAc by the transfer of uridine 5-monophosphate (from uridine 5-triphosphate), a reaction catalyzed by the N-terminal domain. The chain is Bifunctional protein GlmU from Rhodopseudomonas palustris (strain BisB5).